The sequence spans 313 residues: Protein-methionine-sulfoxide reductase catalytic subunit MsrP (313 aa).

The segment at residues 1-44 (MARWRPDTAEREATPEALYLRRREFLALGAAGAVGLLLPRGARA) is a signal peptide (tat-type signal). Residues Asn76, 79–80 (YE), Cys134, Thr169, Asn217, Arg222, and 233–235 (GAK) each bind Mo-molybdopterin.

The protein belongs to the MsrP family. Heterodimer of a catalytic subunit (MsrP) and a heme-binding subunit (MsrQ). Mo-molybdopterin is required as a cofactor. Post-translationally, predicted to be exported by the Tat system. The position of the signal peptide cleavage has not been experimentally proven.

It is found in the periplasm. It catalyses the reaction L-methionyl-[protein] + a quinone + H2O = L-methionyl-(S)-S-oxide-[protein] + a quinol. The catalysed reaction is L-methionyl-[protein] + a quinone + H2O = L-methionyl-(R)-S-oxide-[protein] + a quinol. In terms of biological role, part of the MsrPQ system that repairs oxidized periplasmic proteins containing methionine sulfoxide residues (Met-O), using respiratory chain electrons. Thus protects these proteins from oxidative-stress damage caused by reactive species of oxygen and chlorine generated by the host defense mechanisms. MsrPQ is essential for the maintenance of envelope integrity under bleach stress, rescuing a wide series of structurally unrelated periplasmic proteins from methionine oxidation. The catalytic subunit MsrP is non-stereospecific, being able to reduce both (R-) and (S-) diastereoisomers of methionine sulfoxide. The sequence is that of Protein-methionine-sulfoxide reductase catalytic subunit MsrP from Anaeromyxobacter dehalogenans (strain 2CP-C).